The sequence spans 289 residues: Putative 2-aminoethylphosphonate transport system permease protein PhnU (289 aa).

A run of 6 helical transmembrane segments spans residues 19–39 (WLLL…SLIV), 76–96 (FFAT…LVFI), 111–131 (FIAL…GSAG), 150–170 (FLYS…PLVM), 202–222 (VIFP…LLLT), and 254–274 (YTVA…LFSL). The ABC transmembrane type-1 domain maps to 68–275 (LLNTLQIAFF…VLSLGLFSLY (208 aa)).

This sequence belongs to the binding-protein-dependent transport system permease family.

Its subcellular location is the cell inner membrane. Functionally, probably part of the PhnSTUV complex (TC 3.A.1.11.5) involved in 2-aminoethylphosphonate import. Probably responsible for the translocation of the substrate across the membrane. This is Putative 2-aminoethylphosphonate transport system permease protein PhnU (phnU) from Salmonella typhi.